We begin with the raw amino-acid sequence, 264 residues long: 3-methyl-2-oxobutanoate hydroxymethyltransferase (264 aa).

Residues D45 and D84 each coordinate Mg(2+). Residues 45–46 (DS), D84, and K112 contribute to the 3-methyl-2-oxobutanoate site. E114 is a binding site for Mg(2+). The active-site Proton acceptor is the E181.

Belongs to the PanB family. In terms of assembly, homodecamer; pentamer of dimers. Mg(2+) is required as a cofactor.

The protein resides in the cytoplasm. It carries out the reaction 3-methyl-2-oxobutanoate + (6R)-5,10-methylene-5,6,7,8-tetrahydrofolate + H2O = 2-dehydropantoate + (6S)-5,6,7,8-tetrahydrofolate. It participates in cofactor biosynthesis; (R)-pantothenate biosynthesis; (R)-pantoate from 3-methyl-2-oxobutanoate: step 1/2. Catalyzes the reversible reaction in which hydroxymethyl group from 5,10-methylenetetrahydrofolate is transferred onto alpha-ketoisovalerate to form ketopantoate. This is 3-methyl-2-oxobutanoate hydroxymethyltransferase from Tolumonas auensis (strain DSM 9187 / NBRC 110442 / TA 4).